The sequence spans 725 residues: G-quartet DNA-binding protein TGP1 (725 aa).

A Nuclear localization signal motif is present at residues 241–258 (KKALTDVLQIHEKKERVH). Disordered stretches follow at residues 252-284 (EKKE…LQET) and 468-614 (EIHK…GKRG). The segment covering 256 to 277 (RVHKQQNKNKNPRNAHKNHNRQ) has biased composition (basic residues). Residues 468 to 478 (EIHKIDRERKR) show a composition bias toward basic and acidic residues. Residues 517–544 (NKYKNTSVQNNNNNKNQQRSQSQNQRPP) show a composition bias toward low complexity. Residues 545 to 564 (RNYDNRQGGENRNNRQRNEN) show a composition bias toward basic and acidic residues. Residues 565–593 (NRNNFNGNGHRVNNQNNQRNRNSSYPRNN) are compositionally biased toward low complexity.

In terms of processing, the N-terminus is blocked.

The protein localises to the nucleus. In terms of biological role, binds specifically to parallel G4-DNA, a four-stranded structure stabilized by tetrads of hydrogen-bonded guanines. The chain is G-quartet DNA-binding protein TGP1 (TGP1) from Tetrahymena thermophila.